A 328-amino-acid chain; its full sequence is Malate dehydrogenase (328 aa).

11–17 (GAAGQIG) serves as a coordination point for NAD(+). The substrate site is built by R94 and R100. NAD(+) contacts are provided by residues N107, Q114, and 131–133 (VGN). Residues N133 and R164 each contribute to the substrate site. H189 serves as the catalytic Proton acceptor.

The protein belongs to the LDH/MDH superfamily. MDH type 2 family.

It carries out the reaction (S)-malate + NAD(+) = oxaloacetate + NADH + H(+). Catalyzes the reversible oxidation of malate to oxaloacetate. This is Malate dehydrogenase from Stenotrophomonas maltophilia (strain K279a).